We begin with the raw amino-acid sequence, 198 residues long: Pre-histone-like nucleoprotein (198 aa).

Ser-2 carries the N-acetylserine; by host modification. The propeptide occupies 2 to 24 (SILISPSNNTGWGLRFPSKMFGG). Positions 24–55 (GAKKRSDQHPVRVRGHYRAPWGAHKRGRTGRT) are disordered. N6-acetyllysine; by host is present on residues Lys-27 and Lys-48. Residues 34–52 (VRVRGHYRAPWGAHKRGRT) are compositionally biased toward basic residues. Residues Thr-55 and Thr-74 each carry the phosphothreonine; by host modification. Phosphoserine; by host occurs at positions 183 and 185. Residues 188-198 (RVPVRTRPPRN) carry the Nuclear localization signal motif.

The protein belongs to the adenoviridae histone-like nucleoprotein family. In terms of assembly, interacts with the core-capsid bridging protein; this interaction bridges the virus core to the capsid. Interacts with host NPM1; this interaction might play a role in placing the pre-histone-like nucleoprotein on the viral DNA or regulating viral gene expression. Interacts with host HMGB1; this interaction inhibits host immune response. Post-translationally, cleaved near the N-terminus by the viral protease during virion maturation to form the mature protein.

It localises to the virion. The protein localises to the host nucleus. Its subcellular location is the host nucleolus. Plays a role in the inhibition of host immune response within the nucleus. Interacts with cellular nucleosomes and immobilizes the host immune danger signal HMGB1 on chromatin. In turn, prevents HMGB1 release out of the cell and thus decreases inflammation. Also plays a role in the wrapping and condensation of the viral DNA. May also promote viral genome import into the nucleus. The protein is Pre-histone-like nucleoprotein of Human adenovirus C serotype 2 (HAdV-2).